A 556-amino-acid polypeptide reads, in one-letter code: Arginine--tRNA ligase (556 aa).

A 'HIGH' region motif is present at residues 129-139 (ANPTGPLHVGH).

The protein belongs to the class-I aminoacyl-tRNA synthetase family. In terms of assembly, monomer.

It localises to the cytoplasm. The enzyme catalyses tRNA(Arg) + L-arginine + ATP = L-arginyl-tRNA(Arg) + AMP + diphosphate. The protein is Arginine--tRNA ligase of Desulfosudis oleivorans (strain DSM 6200 / JCM 39069 / Hxd3) (Desulfococcus oleovorans).